The following is an 82-amino-acid chain: Probable tautomerase XF_1725 (82 aa).

Catalysis depends on P2, which acts as the Proton acceptor; via imino nitrogen.

This sequence belongs to the 4-oxalocrotonate tautomerase family.

This Xylella fastidiosa (strain 9a5c) protein is Probable tautomerase XF_1725.